A 65-amino-acid polypeptide reads, in one-letter code: Large ribosomal subunit protein bL35 (65 aa).

A disordered region spans residues 1 to 65 (MPKIKTNRAA…GRLDRMLPYL (65 aa)). The segment covering 10 to 44 (AAKRFRKTASGKYKAGHANRSHILTKKATKRKRNL) has biased composition (basic residues). A compositionally biased stretch (basic and acidic residues) spans 50 to 65 (VRAEDAGRLDRMLPYL).

Belongs to the bacterial ribosomal protein bL35 family.

The polypeptide is Large ribosomal subunit protein bL35 (Xylella fastidiosa (strain M23)).